The following is a 288-amino-acid chain: Oxaloacetate decarboxylase (288 aa).

Position 47 (S47) interacts with substrate. D85 serves as a coordination point for Mg(2+). 2 residues coordinate substrate: R156 and H232.

This sequence belongs to the isocitrate lyase/PEP mutase superfamily. Oxaloacetate decarboxylase family. In terms of assembly, homotetramer; dimer of dimers. Mg(2+) serves as cofactor.

The catalysed reaction is oxaloacetate + H(+) = pyruvate + CO2. Its function is as follows. Catalyzes the decarboxylation of oxaloacetate into pyruvate. Seems to play a role in maintaining cellular concentrations of bicarbonate and pyruvate. In Rhodopseudomonas palustris (strain TIE-1), this protein is Oxaloacetate decarboxylase.